The sequence spans 252 residues: tRNA (guanine-N(7)-)-methyltransferase (252 aa).

4 residues coordinate S-adenosyl-L-methionine: glutamate 51, aspartate 76, asparagine 103, and aspartate 125. Aspartate 125 is an active-site residue. Substrate-binding positions include lysine 129, aspartate 159, and 199–202 (TYYE).

Belongs to the class I-like SAM-binding methyltransferase superfamily. TrmB family.

The enzyme catalyses guanosine(46) in tRNA + S-adenosyl-L-methionine = N(7)-methylguanosine(46) in tRNA + S-adenosyl-L-homocysteine. Its pathway is tRNA modification; N(7)-methylguanine-tRNA biosynthesis. Catalyzes the formation of N(7)-methylguanine at position 46 (m7G46) in tRNA. The chain is tRNA (guanine-N(7)-)-methyltransferase from Bacteroides fragilis (strain YCH46).